The sequence spans 160 residues: Mediator of RNA polymerase II transcription subunit 31 (160 aa).

Residues 124–160 (GTGIENEQGGTEANNPGEAEGEQTKGTADQQDGSSKT) form a disordered region. Residues 147-160 (TKGTADQQDGSSKT) are compositionally biased toward polar residues.

This sequence belongs to the Mediator complex subunit 31 family. As to quaternary structure, component of the Mediator complex.

It is found in the nucleus. Component of the Mediator complex, a coactivator involved in the regulated transcription of nearly all RNA polymerase II-dependent genes. Mediator functions as a bridge to convey information from gene-specific regulatory proteins to the basal RNA polymerase II transcription machinery. Mediator is recruited to promoters by direct interactions with regulatory proteins and serves as a scaffold for the assembly of a functional preinitiation complex with RNA polymerase II and the general transcription factors. In Aspergillus terreus (strain NIH 2624 / FGSC A1156), this protein is Mediator of RNA polymerase II transcription subunit 31 (soh1).